We begin with the raw amino-acid sequence, 274 residues long: Small ribosomal subunit biogenesis GTPase RsgA (274 aa).

Residues Lys58–Tyr215 form the CP-type G domain. GTP-binding positions include Ser108 to Asp111 and Gly158 to Thr166. The Zn(2+) site is built by Cys238, Cys243, His245, and Cys252.

This sequence belongs to the TRAFAC class YlqF/YawG GTPase family. RsgA subfamily. As to quaternary structure, monomer. Associates with 30S ribosomal subunit, binds 16S rRNA. The cofactor is Zn(2+).

It localises to the cytoplasm. Its function is as follows. One of several proteins that assist in the late maturation steps of the functional core of the 30S ribosomal subunit. Helps release RbfA from mature subunits. May play a role in the assembly of ribosomal proteins into the subunit. Circularly permuted GTPase that catalyzes slow GTP hydrolysis, GTPase activity is stimulated by the 30S ribosomal subunit. The polypeptide is Small ribosomal subunit biogenesis GTPase RsgA (Mycoplasmoides gallisepticum (strain R(low / passage 15 / clone 2)) (Mycoplasma gallisepticum)).